The chain runs to 231 residues: Ribonuclease 3 (231 aa).

Residues 3-130 enclose the RNase III domain; that stretch reads MHEFFENFGI…VTAAIYLDQT (128 aa). Glutamate 43 serves as a coordination point for Mg(2+). Aspartate 47 is an active-site residue. The Mg(2+) site is built by aspartate 116 and glutamate 119. Glutamate 119 is a catalytic residue. Positions 157 to 228 constitute a DRBM domain; sequence DYKSELQEII…AKDCLNKLKK (72 aa).

The protein belongs to the ribonuclease III family. Homodimer. Mg(2+) serves as cofactor.

The protein resides in the cytoplasm. It catalyses the reaction Endonucleolytic cleavage to 5'-phosphomonoester.. In terms of biological role, digests double-stranded RNA. Involved in the processing of primary rRNA transcript to yield the immediate precursors to the large and small rRNAs (23S and 16S). Processes some mRNAs, and tRNAs when they are encoded in the rRNA operon. Processes pre-crRNA and tracrRNA of type II CRISPR loci if present in the organism. This is Ribonuclease 3 from Mesoplasma florum (strain ATCC 33453 / NBRC 100688 / NCTC 11704 / L1) (Acholeplasma florum).